Here is a 557-residue protein sequence, read N- to C-terminus: Dihydroxy-acid dehydratase (557 aa).

Asp-78 contacts Mg(2+). Cys-119 contributes to the [2Fe-2S] cluster binding site. Residues Asp-120 and Lys-121 each coordinate Mg(2+). Lys-121 is subject to N6-carboxylysine. Cys-192 lines the [2Fe-2S] cluster pocket. Glu-442 contacts Mg(2+). Residue Ser-468 is the Proton acceptor of the active site.

The protein belongs to the IlvD/Edd family. As to quaternary structure, homodimer. Requires [2Fe-2S] cluster as cofactor. It depends on Mg(2+) as a cofactor.

The catalysed reaction is (2R)-2,3-dihydroxy-3-methylbutanoate = 3-methyl-2-oxobutanoate + H2O. The enzyme catalyses (2R,3R)-2,3-dihydroxy-3-methylpentanoate = (S)-3-methyl-2-oxopentanoate + H2O. It participates in amino-acid biosynthesis; L-isoleucine biosynthesis; L-isoleucine from 2-oxobutanoate: step 3/4. Its pathway is amino-acid biosynthesis; L-valine biosynthesis; L-valine from pyruvate: step 3/4. Functionally, functions in the biosynthesis of branched-chain amino acids. Catalyzes the dehydration of (2R,3R)-2,3-dihydroxy-3-methylpentanoate (2,3-dihydroxy-3-methylvalerate) into 2-oxo-3-methylpentanoate (2-oxo-3-methylvalerate) and of (2R)-2,3-dihydroxy-3-methylbutanoate (2,3-dihydroxyisovalerate) into 2-oxo-3-methylbutanoate (2-oxoisovalerate), the penultimate precursor to L-isoleucine and L-valine, respectively. The polypeptide is Dihydroxy-acid dehydratase (Bacillus cereus (strain G9842)).